The primary structure comprises 57 residues: Large ribosomal subunit protein bL32 (57 aa).

It belongs to the bacterial ribosomal protein bL32 family.

The chain is Large ribosomal subunit protein bL32 from Streptomyces griseus subsp. griseus (strain JCM 4626 / CBS 651.72 / NBRC 13350 / KCC S-0626 / ISP 5235).